We begin with the raw amino-acid sequence, 115 residues long: Large ribosomal subunit protein uL24 (115 aa).

Belongs to the universal ribosomal protein uL24 family. Part of the 50S ribosomal subunit.

Functionally, one of two assembly initiator proteins, it binds directly to the 5'-end of the 23S rRNA, where it nucleates assembly of the 50S subunit. One of the proteins that surrounds the polypeptide exit tunnel on the outside of the subunit. The protein is Large ribosomal subunit protein uL24 of Aster yellows witches'-broom phytoplasma (strain AYWB).